The primary structure comprises 609 residues: MESSVNGVDSLSEVQNSVSGVHHHDPLPSGTPQPSRPPLRASRNYDGGHQTKAIHHHNSHVINQKHSHQEGKTLKQEGLPTKLSSKQPPLDDSKGCEPNGVLESEKKRVVDNHGKNYSQPDATFCASPQNSFYSATVYSEAKESFTNTEVSECASVDKSCESEVANSSDFNESRKTSICRASTGSDASDESSTSSLSSVLYKPHKANDIRWEAIQAVRTRDGMLEMRHFRLLKKLGCGDIGSVYLAELSGTRTSFAMKVMNKTELANRKKLLRAQTEREILQSLDHPFLPTLYTHFETEIFSCLVMEFCPGGDLHALRQRQPGKYFSEHAVRFYVAEVLLSLEYLHMLGIIYRDLKPENVLVREDGHIMLSDFDLSLRCSVSPTLVKSSNNLQTKSSGYCVQPSCIEPTCVMQPDCIKPSCFTPRFLSGKSKKDKKSKPKNDMHNQVTPLPELIAEPTNARSMSFVGTHEYLAPEIIKGEGHGSAVDWWTFGIFLYELLFGRTPFKGSANRATLFNVIGQPLRFPESPTVSFAARDLIRGLLVKEPQHRLAYRRGATEIKQHPFFQNVNWALIRCATPPEVPRQVINLPQTEKDLGVKPSGNYLDIDFF.

The segment covering 1–19 (MESSVNGVDSLSEVQNSVS) has biased composition (polar residues). 2 disordered regions span residues 1-51 (MESS…GHQT) and 80-100 (PTKL…EPNG). The Protein kinase domain occupies 229–565 (FRLLKKLGCG…ATEIKQHPFF (337 aa)). Residues 235-243 (LGCGDIGSV) and Lys258 contribute to the ATP site. Catalysis depends on Asp354, which acts as the Proton acceptor. The tract at residues 429–448 (GKSKKDKKSKPKNDMHNQVT) is disordered.

It belongs to the protein kinase superfamily. Ser/Thr protein kinase family.

It catalyses the reaction L-seryl-[protein] + ATP = O-phospho-L-seryl-[protein] + ADP + H(+). It carries out the reaction L-threonyl-[protein] + ATP = O-phospho-L-threonyl-[protein] + ADP + H(+). The protein is Protein kinase PVPK-1 of Phaseolus vulgaris (Kidney bean).